The primary structure comprises 312 residues: Mevalonate kinase (312 aa).

Residue 104–114 coordinates ATP; it reads PISCGLGSSAS. The active-site Proton acceptor is Asp-155.

Belongs to the GHMP kinase family. Mevalonate kinase subfamily. In terms of assembly, homodimer. Mg(2+) serves as cofactor.

It localises to the cytoplasm. The enzyme catalyses (R)-mevalonate + ATP = (R)-5-phosphomevalonate + ADP + H(+). It participates in isoprenoid biosynthesis; isopentenyl diphosphate biosynthesis via mevalonate pathway; isopentenyl diphosphate from (R)-mevalonate: step 1/3. Its activity is regulated as follows. Farnesyl- and geranyl-pyrophosphates are competitive inhibitors. Slightly inhibited by high concentration of ATP. Functionally, catalyzes the phosphorylation of (R)-mevalonate (MVA) to (R)-mevalonate 5-phosphate (MVAP). Functions in the mevalonate (MVA) pathway leading to isopentenyl diphosphate (IPP), a key precursor for the biosynthesis of isoprenoid compounds such as archaeal membrane lipids. This is Mevalonate kinase from Methanocaldococcus jannaschii (strain ATCC 43067 / DSM 2661 / JAL-1 / JCM 10045 / NBRC 100440) (Methanococcus jannaschii).